Consider the following 357-residue polypeptide: 3-isopropylmalate dehydrogenase (357 aa).

75-88 (GPKWDTLPPAERPE) is an NAD(+) binding site. Substrate contacts are provided by Arg-96, Arg-106, Arg-134, and Asp-222. Positions 222, 246, and 250 each coordinate Mg(2+). An NAD(+)-binding site is contributed by 279-291 (GSAPDIAGQQKAN).

Belongs to the isocitrate and isopropylmalate dehydrogenases family. LeuB type 1 subfamily. In terms of assembly, homodimer. Mg(2+) serves as cofactor. It depends on Mn(2+) as a cofactor.

The protein resides in the cytoplasm. It catalyses the reaction (2R,3S)-3-isopropylmalate + NAD(+) = 4-methyl-2-oxopentanoate + CO2 + NADH. The protein operates within amino-acid biosynthesis; L-leucine biosynthesis; L-leucine from 3-methyl-2-oxobutanoate: step 3/4. Catalyzes the oxidation of 3-carboxy-2-hydroxy-4-methylpentanoate (3-isopropylmalate) to 3-carboxy-4-methyl-2-oxopentanoate. The product decarboxylates to 4-methyl-2 oxopentanoate. This chain is 3-isopropylmalate dehydrogenase, found in Moorella thermoacetica (strain ATCC 39073 / JCM 9320).